A 477-amino-acid chain; its full sequence is Glycogen synthase (477 aa).

Lys-15 contributes to the ADP-alpha-D-glucose binding site.

This sequence belongs to the glycosyltransferase 1 family. Bacterial/plant glycogen synthase subfamily.

The catalysed reaction is [(1-&gt;4)-alpha-D-glucosyl](n) + ADP-alpha-D-glucose = [(1-&gt;4)-alpha-D-glucosyl](n+1) + ADP + H(+). It functions in the pathway glycan biosynthesis; glycogen biosynthesis. Its function is as follows. Synthesizes alpha-1,4-glucan chains using ADP-glucose. This is Glycogen synthase from Myxococcus xanthus (strain DK1622).